The following is a 308-amino-acid chain: UPF0026 protein HP_0117 (308 aa).

One can recognise a Radical SAM core domain in the interval 18 to 248 (FGKSLGVDLS…SLPKRSITQA (231 aa)). Positions 33, 37, and 40 each coordinate [4Fe-4S] cluster.

Belongs to the UPF0026 family. [4Fe-4S] cluster is required as a cofactor.

This Helicobacter pylori (strain ATCC 700392 / 26695) (Campylobacter pylori) protein is UPF0026 protein HP_0117.